The following is a 1320-amino-acid chain: Junctional cadherin 5-associated protein (1320 aa).

Disordered regions lie at residues 1-124, 183-202, 209-233, 252-426, 452-492, 676-720, 741-802, and 835-942; these read MYSV…GSGS, KKPRELGRQASDGDGRKRPQ, YPFVHGEHTSQNRKKSQSLPRALSP, GVPK…SIQY, DDTS…NEQS, ASSP…PTPT, NQKP…STTG, and ELQE…QKSQ. 2 stretches are compositionally biased toward polar residues: residues 58-71 and 95-107; these read RTSLGTGHVSNSEN and NQPSLAWSSQPQS. Over residues 108–119 the composition is skewed to basic and acidic residues; the sequence is GRDDIYWSRGRQ. Over residues 255–267 the composition is skewed to pro residues; it reads KVPPYPPSFPSPS. The segment covering 308 to 329 has biased composition (basic and acidic residues); sequence FQDHQHRDPRGSYPTRSKDPSH. Residues 338–356 show a composition bias toward pro residues; it reads LEPPVYVPPPSYRSPPQHI. The span at 369–378 shows a compositional bias: polar residues; it reads VSSNQSQQQV. The span at 404–415 shows a compositional bias: pro residues; it reads GSPPQGLPPQPY. The segment covering 454–465 has biased composition (polar residues); that stretch reads TSYNPGLLTTQE. A Phosphothreonine modification is found at Thr-484. Ser-486 is modified (phosphoserine). Positions 741–782 are enriched in polar residues; it reads NQKPSVPHLQGQTSLSPSRNSAFSRTSSAINQASMSKGTSDQ. Acidic residues predominate over residues 849–859; it reads EDSEAEQPEDC. Phosphoserine is present on Ser-851. Over residues 865-877 the composition is skewed to polar residues; it reads KSWALQGTRTAQQ. Phosphoserine occurs at positions 1027 and 1033. 2 disordered regions span residues 1085–1116 and 1153–1174; these read ARRTEQSQLPEPDASACNPSSSREDSSHSLAL and SDVDGFPTSQATSPEPGKKDEE. Phosphoserine is present on residues Ser-1245 and Ser-1248. Residues 1275-1320 are disordered; that stretch reads DEAWQAGHLPSVSQNENGHPEVPRDKMSDQDLWCADSYDPSRVERV. Over residues 1292–1303 the composition is skewed to basic and acidic residues; it reads GHPEVPRDKMSD.

The protein localises to the cell junction. Its subcellular location is the adherens junction. The protein is Junctional cadherin 5-associated protein of Mus musculus (Mouse).